Consider the following 260-residue polypeptide: Thiazole synthase (260 aa).

Lys96 functions as the Schiff-base intermediate with DXP in the catalytic mechanism. 1-deoxy-D-xylulose 5-phosphate contacts are provided by residues Gly157, 184–185, and 206–207; these read AG and NT.

It belongs to the ThiG family. As to quaternary structure, homotetramer. Forms heterodimers with either ThiH or ThiS.

Its subcellular location is the cytoplasm. The catalysed reaction is [ThiS sulfur-carrier protein]-C-terminal-Gly-aminoethanethioate + 2-iminoacetate + 1-deoxy-D-xylulose 5-phosphate = [ThiS sulfur-carrier protein]-C-terminal Gly-Gly + 2-[(2R,5Z)-2-carboxy-4-methylthiazol-5(2H)-ylidene]ethyl phosphate + 2 H2O + H(+). Its pathway is cofactor biosynthesis; thiamine diphosphate biosynthesis. In terms of biological role, catalyzes the rearrangement of 1-deoxy-D-xylulose 5-phosphate (DXP) to produce the thiazole phosphate moiety of thiamine. Sulfur is provided by the thiocarboxylate moiety of the carrier protein ThiS. In vitro, sulfur can be provided by H(2)S. The chain is Thiazole synthase from Bradyrhizobium sp. (strain ORS 278).